Reading from the N-terminus, the 376-residue chain is Cytoplasmic tRNA 2-thiolation protein 1 (376 aa).

Belongs to the TtcA family. CTU1/NCS6/ATPBD3 subfamily.

It localises to the cytoplasm. Its pathway is tRNA modification; 5-methoxycarbonylmethyl-2-thiouridine-tRNA biosynthesis. Plays a central role in 2-thiolation of mcm(5)S(2)U at tRNA wobble positions of tRNA(Lys), tRNA(Glu) and tRNA(Gln). Directly binds tRNAs and probably acts by catalyzing adenylation of tRNAs, an intermediate required for 2-thiolation. It is unclear whether it acts as a sulfurtransferase that transfers sulfur from thiocarboxylated URM1 onto the uridine of tRNAs at wobble position. Prior mcm(5) tRNA modification by the elongator complex is required for 2-thiolation. May also be involved in protein urmylation. In Scheffersomyces stipitis (strain ATCC 58785 / CBS 6054 / NBRC 10063 / NRRL Y-11545) (Yeast), this protein is Cytoplasmic tRNA 2-thiolation protein 1.